The chain runs to 246 residues: UPF0309 protein TTE0306 (246 aa).

The region spanning 31–212 (ITESLISEDS…EAEIITNMLE (182 aa)) is the SIS domain.

It belongs to the UPF0309 family.

This Caldanaerobacter subterraneus subsp. tengcongensis (strain DSM 15242 / JCM 11007 / NBRC 100824 / MB4) (Thermoanaerobacter tengcongensis) protein is UPF0309 protein TTE0306.